The sequence spans 315 residues: Homoserine kinase (315 aa).

96 to 106 (PHSRGLGSSAA) lines the ATP pocket.

This sequence belongs to the GHMP kinase family. Homoserine kinase subfamily.

It is found in the cytoplasm. The enzyme catalyses L-homoserine + ATP = O-phospho-L-homoserine + ADP + H(+). It participates in amino-acid biosynthesis; L-threonine biosynthesis; L-threonine from L-aspartate: step 4/5. Functionally, catalyzes the ATP-dependent phosphorylation of L-homoserine to L-homoserine phosphate. In Mycolicibacterium paratuberculosis (strain ATCC BAA-968 / K-10) (Mycobacterium paratuberculosis), this protein is Homoserine kinase.